The primary structure comprises 437 residues: Neomycin resistance protein (437 aa).

2 disordered regions span residues 161-285 and 305-338; these read GQRG…EEEA and VSGA…PVPD. The segment covering 203–229 has biased composition (low complexity); the sequence is PPTGARSPGATAGARATASTSSSSVRS. A compositionally biased stretch (basic residues) spans 324 to 338; it reads RRRHRGRRHGRPVPD.

The protein belongs to the Gram-positive plasmids replication protein type 1 family.

The polypeptide is Neomycin resistance protein (Streptomyces cyanogenus).